A 163-amino-acid polypeptide reads, in one-letter code: Large ribosomal subunit protein bL17 (163 aa).

The interval 127–163 is disordered; sequence KEVKKAKSRRGGKAKKAEGTAPEAPAAESESTTEASE. A compositionally biased stretch (basic residues) spans 128-140; it reads EVKKAKSRRGGKA. The segment covering 145–163 has biased composition (low complexity); it reads GTAPEAPAAESESTTEASE.

Belongs to the bacterial ribosomal protein bL17 family. In terms of assembly, part of the 50S ribosomal subunit. Contacts protein L32.

In Flavobacterium johnsoniae (strain ATCC 17061 / DSM 2064 / JCM 8514 / BCRC 14874 / CCUG 350202 / NBRC 14942 / NCIMB 11054 / UW101) (Cytophaga johnsonae), this protein is Large ribosomal subunit protein bL17.